Consider the following 697-residue polypeptide: Histone-lysine N-methyltransferase SETDB2 (697 aa).

An MBD domain is found at 172-242 (LKKENPLNLP…DNFSFSTQVQ (71 aa)). One can recognise a Pre-SET domain in the interval 304–378 (KCCSCTDGCL…LCQNRVVQHG (75 aa)). Zn(2+)-binding residues include Cys306, Cys308, Cys312, Cys318, Cys320, Cys359, Cys363, Cys365, and Cys370. The SET domain maps to 381-672 (LRLQVFKTDT…AGTELTWDYN (292 aa)). 391–393 (KGW) serves as a coordination point for S-adenosyl-L-methionine. 2 disordered regions span residues 438–461 (KEDN…HSDS) and 529–605 (VHNS…STSP). The span at 565-581 (SGYVSEESSSSVISGGH) shows a compositional bias: low complexity. Residues Arg626 and 629-630 (NH) each bind S-adenosyl-L-methionine. The Zn(2+) site is built by Cys632, Cys685, Cys687, and Cys692.

This sequence belongs to the class V-like SAM-binding methyltransferase superfamily.

The protein localises to the nucleus. The protein resides in the chromosome. It carries out the reaction N(6),N(6)-dimethyl-L-lysyl(9)-[histone H3] + S-adenosyl-L-methionine = N(6),N(6),N(6)-trimethyl-L-lysyl(9)-[histone H3] + S-adenosyl-L-homocysteine + H(+). Its function is as follows. Histone methyltransferase involved in left-right axis specification in early development and mitosis. Specifically trimethylates 'Lys-9' of histone H3 (H3K9me3). H3K9me3 represents a specific tag for epigenetic transcriptional repression by recruiting HP1 (CBX1, CBX3 and/or CBX5) proteins to methylated histones. Contributes to H3K9me3 in both the interspersed repetitive elements and centromere-associated repeats. Plays a role in chromosome condensation and segregation during mitosis. The chain is Histone-lysine N-methyltransferase SETDB2 (setdb2) from Xenopus tropicalis (Western clawed frog).